Here is a 296-residue protein sequence, read N- to C-terminus: UDP-N-acetylenolpyruvoylglucosamine reductase (296 aa).

An FAD-binding PCMH-type domain is found at 26-191 (RIGGPANYFK…LSATFRLSKS (166 aa)). Residue Arg-170 is part of the active site. Cys-218 functions as the Proton donor in the catalytic mechanism. The active site involves Glu-287.

The protein belongs to the MurB family. FAD is required as a cofactor.

The protein localises to the cytoplasm. The catalysed reaction is UDP-N-acetyl-alpha-D-muramate + NADP(+) = UDP-N-acetyl-3-O-(1-carboxyvinyl)-alpha-D-glucosamine + NADPH + H(+). Its pathway is cell wall biogenesis; peptidoglycan biosynthesis. In terms of biological role, cell wall formation. The protein is UDP-N-acetylenolpyruvoylglucosamine reductase of Chlamydia felis (strain Fe/C-56) (Chlamydophila felis).